Consider the following 246-residue polypeptide: Probable transcriptional regulatory protein WRi_002620 (246 aa).

Residues 1-22 (MAGHSQFSNIKHRKGAQDAKRS) form a disordered region.

It belongs to the TACO1 family.

The protein resides in the cytoplasm. The polypeptide is Probable transcriptional regulatory protein WRi_002620 (Wolbachia sp. subsp. Drosophila simulans (strain wRi)).